The following is a 385-amino-acid chain: Lipid-A-disaccharide synthase (385 aa).

The protein belongs to the LpxB family.

The catalysed reaction is a lipid X + a UDP-2-N,3-O-bis[(3R)-3-hydroxyacyl]-alpha-D-glucosamine = a lipid A disaccharide + UDP + H(+). The protein operates within bacterial outer membrane biogenesis; LPS lipid A biosynthesis. Functionally, condensation of UDP-2,3-diacylglucosamine and 2,3-diacylglucosamine-1-phosphate to form lipid A disaccharide, a precursor of lipid A, a phosphorylated glycolipid that anchors the lipopolysaccharide to the outer membrane of the cell. The chain is Lipid-A-disaccharide synthase from Rickettsia canadensis (strain McKiel).